The following is a 276-amino-acid chain: Formamidopyrimidine-DNA glycosylase (276 aa).

Pro-2 serves as the catalytic Schiff-base intermediate with DNA. Glu-3 functions as the Proton donor in the catalytic mechanism. Lys-60 functions as the Proton donor; for beta-elimination activity in the catalytic mechanism. 2 residues coordinate DNA: Arg-113 and Arg-152. Residues 241–275 (NVFRKTGHPCPRCGHLIEKLIVAQRSTHICPICQK) form an FPG-type zinc finger. The active-site Proton donor; for delta-elimination activity is the Arg-265.

It belongs to the FPG family. Monomer. The cofactor is Zn(2+).

The enzyme catalyses Hydrolysis of DNA containing ring-opened 7-methylguanine residues, releasing 2,6-diamino-4-hydroxy-5-(N-methyl)formamidopyrimidine.. The catalysed reaction is 2'-deoxyribonucleotide-(2'-deoxyribose 5'-phosphate)-2'-deoxyribonucleotide-DNA = a 3'-end 2'-deoxyribonucleotide-(2,3-dehydro-2,3-deoxyribose 5'-phosphate)-DNA + a 5'-end 5'-phospho-2'-deoxyribonucleoside-DNA + H(+). Functionally, involved in base excision repair of DNA damaged by oxidation or by mutagenic agents. Acts as a DNA glycosylase that recognizes and removes damaged bases. Has a preference for oxidized purines, such as 7,8-dihydro-8-oxoguanine (8-oxoG). Has AP (apurinic/apyrimidinic) lyase activity and introduces nicks in the DNA strand. Cleaves the DNA backbone by beta-delta elimination to generate a single-strand break at the site of the removed base with both 3'- and 5'-phosphates. The polypeptide is Formamidopyrimidine-DNA glycosylase (Protochlamydia amoebophila (strain UWE25)).